Here is a 321-residue protein sequence, read N- to C-terminus: Glutaminase (321 aa).

7 residues coordinate substrate: Ser-69, Asn-120, Glu-165, Asn-172, Tyr-196, Tyr-248, and Val-266.

This sequence belongs to the glutaminase family. As to quaternary structure, homotetramer.

It carries out the reaction L-glutamine + H2O = L-glutamate + NH4(+). The protein is Glutaminase of Parabacteroides distasonis (strain ATCC 8503 / DSM 20701 / CIP 104284 / JCM 5825 / NCTC 11152).